A 151-amino-acid chain; its full sequence is 6,7-dimethyl-8-ribityllumazine synthase (151 aa).

Residues Phe-15, 49–51 (AVE), and 73–75 (AVI) each bind 5-amino-6-(D-ribitylamino)uracil. (2S)-2-hydroxy-3-oxobutyl phosphate is bound at residue 78 to 79 (ET). His-81 functions as the Proton donor in the catalytic mechanism. Phe-106 lines the 5-amino-6-(D-ribitylamino)uracil pocket. Position 120 (Arg-120) interacts with (2S)-2-hydroxy-3-oxobutyl phosphate.

Belongs to the DMRL synthase family. Forms an icosahedral capsid composed of 60 subunits, arranged as a dodecamer of pentamers.

The enzyme catalyses (2S)-2-hydroxy-3-oxobutyl phosphate + 5-amino-6-(D-ribitylamino)uracil = 6,7-dimethyl-8-(1-D-ribityl)lumazine + phosphate + 2 H2O + H(+). The protein operates within cofactor biosynthesis; riboflavin biosynthesis; riboflavin from 2-hydroxy-3-oxobutyl phosphate and 5-amino-6-(D-ribitylamino)uracil: step 1/2. Catalyzes the formation of 6,7-dimethyl-8-ribityllumazine by condensation of 5-amino-6-(D-ribitylamino)uracil with 3,4-dihydroxy-2-butanone 4-phosphate. This is the penultimate step in the biosynthesis of riboflavin. This is 6,7-dimethyl-8-ribityllumazine synthase from Coxiella burnetii (strain CbuG_Q212) (Coxiella burnetii (strain Q212)).